The following is a 314-amino-acid chain: MMGQNQTSISDFLLLGLPIQPEQQNLCYALFLAMYLTTLLGNLLIIVLIRLDSHLHTPMYLFLSNLSFSDLCFSSVTIPKLLQNMQNQDPSIPYADCLTQMYFFLLFGDLESFLLVAMAYDRYVAICFPLHYTAIMSPMLCLALVALSWVLTTFHAMLHTLLMARLCFCADNVIPHFFCDMSALLKLAFSDTRVNEWVIFIMGGLILVIPFLLILGSYARIVSSILKVPSSKGICKAFSTCGSHLSVVSLFYGTVIGLYLCSSANSSTLKDTVMAMMYTVVTPMLNPFIYSLRNRDMKGALSRVIHQKKTFFSL.

Over 1–25 (MMGQNQTSISDFLLLGLPIQPEQQN) the chain is Extracellular. An N-linked (GlcNAc...) asparagine glycan is attached at Asn5. A helical membrane pass occupies residues 26–49 (LCYALFLAMYLTTLLGNLLIIVLI). At 50–57 (RLDSHLHT) the chain is on the cytoplasmic side. Residues 58 to 79 (PMYLFLSNLSFSDLCFSSVTIP) traverse the membrane as a helical segment. The Extracellular segment spans residues 80 to 100 (KLLQNMQNQDPSIPYADCLTQ). A helical transmembrane segment spans residues 101-120 (MYFFLLFGDLESFLLVAMAY). Topologically, residues 121–139 (DRYVAICFPLHYTAIMSPM) are cytoplasmic. A helical membrane pass occupies residues 140-158 (LCLALVALSWVLTTFHAML). Residues 159 to 195 (HTLLMARLCFCADNVIPHFFCDMSALLKLAFSDTRVN) lie on the Extracellular side of the membrane. Residues 196–219 (EWVIFIMGGLILVIPFLLILGSYA) traverse the membrane as a helical segment. The Cytoplasmic portion of the chain corresponds to 220 to 236 (RIVSSILKVPSSKGICK). The chain crosses the membrane as a helical span at residues 237-259 (AFSTCGSHLSVVSLFYGTVIGLY). The Extracellular portion of the chain corresponds to 260–272 (LCSSANSSTLKDT). Residues 273–292 (VMAMMYTVVTPMLNPFIYSL) traverse the membrane as a helical segment. The Cytoplasmic portion of the chain corresponds to 293–314 (RNRDMKGALSRVIHQKKTFFSL).

Belongs to the G-protein coupled receptor 1 family.

The protein resides in the cell membrane. In terms of biological role, odorant receptor. The protein is Olfactory receptor 1E1 (OR1E1) of Homo sapiens (Human).